A 326-amino-acid polypeptide reads, in one-letter code: Protein SEH1 (326 aa).

WD repeat units follow at residues 7-46 (TLDSGTTCSSWNQSGDRLAAGSLNGKLSIYESSTSSSSTF), 54-95 (VSES…AHGL), 105-146 (NKSS…ELKN), 224-266 (DKGD…DLEG), and 278-317 (GHQGEVWQMEWDMSGMTLASTGSDGMVKLWQSNLNGEWHE).

Belongs to the WD repeat SEC13 family. In terms of assembly, part of the nuclear pore complex (NPC). The NPC has an eight-fold symmetrical structure comprising a central transport channel and two rings, the cytoplasmic and nuclear rings, to which eight filaments are attached. The cytoplasmic filaments have loose ends, while the nuclear filaments are joined in a distal ring, forming a nuclear basket. NPCs are highly dynamic in configuration and composition, and can be devided in 3 subcomplexes, the NUP62 subcomplex, the NUP107-160 subcomplex and the NUP93 subcomplex, containing approximately 30 different nucleoporin proteins.

The protein resides in the nucleus envelope. It is found in the nucleus. It localises to the cytoplasm. Its subcellular location is the nuclear pore complex. In terms of biological role, required for proper export of mRNAs from the nucleus to the cytoplasm. This Arabidopsis thaliana (Mouse-ear cress) protein is Protein SEH1.